Consider the following 221-residue polypeptide: uncharacterized protein (221 aa).

The protein to E.coli YheO.

This is an uncharacterized protein from Haemophilus influenzae (strain ATCC 51907 / DSM 11121 / KW20 / Rd).